The chain runs to 277 residues: F41 fimbrial protein (277 aa).

An N-terminal signal peptide occupies residues 1–22 (MKKTLIALAVAASAAVSGSVMA).

This sequence belongs to the fimbrial K88 protein family.

The protein resides in the fimbrium. In terms of biological role, fimbriae (also called pili), polar filaments radiating from the surface of the bacterium to a length of 0.5-1.5 micrometers and numbering 100-300 per cell, enable bacteria to colonize the epithelium of specific host organs. The chain is F41 fimbrial protein (FimF41a) from Escherichia coli.